Consider the following 454-residue polypeptide: Epsin-1 (454 aa).

In terms of domain architecture, ENTH spans 11 to 143; it reads NLVKGYSSTQ…SDDERLNEER (133 aa). 2 disordered regions span residues 142–195 and 292–350; these read ERNM…EDYE and YLAS…GNQS. Over residues 149-160 the composition is skewed to basic residues; it reads GRNRKGRRRRGT. Phosphothreonine is present on Thr160. A Phosphoserine modification is found at Ser163. UIM domains follow at residues 165–184 and 189–208; these read ENDD…AEED and KQDE…EELK. A Phosphothreonine modification is found at Thr180. Residues 180-191 show a composition bias toward basic and acidic residues; the sequence is TAEEDERRRKQD. The segment covering 292–302 has biased composition (low complexity); sequence YLASMQQQQQA. Polar residues-rich tracts occupy residues 303–329 and 340–350; these read MSNN…ASSP and PLIQNRTGNQS. The residue at position 328 (Ser328) is a Phosphoserine. Lys357 is covalently cross-linked (Glycyl lysine isopeptide (Lys-Gly) (interchain with G-Cter in ubiquitin)). Phosphothreonine is present on residues Thr364, Thr366, Thr384, Thr386, and Thr388. Over residues 384–398 the composition is skewed to polar residues; that stretch reads TKTGTFINSQGTGYR. Residues 384-405 are disordered; that stretch reads TKTGTFINSQGTGYRQVSDDPN. Phosphothreonine; by PRK1 is present on residues Thr395 and Thr415. Polar residues predominate over residues 418-428; sequence PSTSVVPTQTG. The interval 418–454 is disordered; sequence PSTSVVPTQTGYGFGNQSQQQSQNNGSNNRGYTLIDL. The segment covering 432-446 has biased composition (low complexity); sequence GNQSQQQSQNNGSNN. The clathrin-binding stretch occupies residues 447-454; that stretch reads RGYTLIDL.

Belongs to the epsin family. Interacts with EDE1 and PAN1.

The protein resides in the cytoplasm. Its subcellular location is the membrane. Binds to membranes enriched in phosphatidylinositol 3,5-bisphosphate (PtdIns(3,5)P2) and phosphatidylinositol 4,5-bisphosphate (PtdIns(4,5)P2). Required for endocytosis and localization of actin. Negatively regulated via phosphorylation. The polypeptide is Epsin-1 (ENT1) (Saccharomyces cerevisiae (strain ATCC 204508 / S288c) (Baker's yeast)).